The chain runs to 194 residues: Protein DROOPING LEAF (194 aa).

The C4-type zinc-finger motif lies at 15-42 (CTYCNTVLAVGVPCKRLMDTVTVKCGHC). The disordered stretch occupies residues 83–103 (LVSPTSNEGSPRAPFVVKPPE).

The protein belongs to the YABBY family.

It localises to the nucleus. Regulates carpel specification in flower development. Severe or intermediate mutation in DL causes complete or partial homeotic conversion of carpels into stamens without affecting the identities of other floral organs. Interacts antagonistically with class B genes and controls floral meristem determinacy. Regulates midrib formation in leaves probably by inducing cell proliferation in the central region of the leaf. The sequence is that of Protein DROOPING LEAF (DL) from Oryza sativa subsp. japonica (Rice).